The primary structure comprises 440 residues: Cell division protein FtsA (440 aa).

Residues 396–440 form a disordered region; it reads VSSSEEQEQHHHQNEVQQRPKGKQKTQAEHNKQSKMKKLLSMFWE.

The protein belongs to the FtsA/MreB family. In terms of assembly, homodimer. Interacts with FtsZ.

Its subcellular location is the cell membrane. Cell division protein that is required for the assembly of the Z ring. May serve as a membrane anchor for the Z ring. Binds and hydrolyzes ATP. Also involved in sporulation. This is Cell division protein FtsA from Bacillus subtilis (strain 168).